The sequence spans 104 residues: ATP-dependent Clp protease adapter protein ClpS (104 aa).

It belongs to the ClpS family. Binds to the N-terminal domain of the chaperone ClpA.

Its function is as follows. Involved in the modulation of the specificity of the ClpAP-mediated ATP-dependent protein degradation. This Burkholderia ambifaria (strain MC40-6) protein is ATP-dependent Clp protease adapter protein ClpS.